A 394-amino-acid polypeptide reads, in one-letter code: 1-deoxy-D-xylulose 5-phosphate reductoisomerase (394 aa).

Positions 14, 15, 16, 17, 40, 43, and 130 each coordinate NADPH. 1-deoxy-D-xylulose 5-phosphate is bound at residue K131. E132 is a binding site for NADPH. A Mn(2+)-binding site is contributed by D154. 4 residues coordinate 1-deoxy-D-xylulose 5-phosphate: S155, E156, S180, and H203. E156 is a Mn(2+) binding site. G209 lines the NADPH pocket. Residues S216, N221, K222, and E225 each coordinate 1-deoxy-D-xylulose 5-phosphate. E225 contacts Mn(2+).

It belongs to the DXR family. Requires Mg(2+) as cofactor. Mn(2+) is required as a cofactor.

The catalysed reaction is 2-C-methyl-D-erythritol 4-phosphate + NADP(+) = 1-deoxy-D-xylulose 5-phosphate + NADPH + H(+). Its pathway is isoprenoid biosynthesis; isopentenyl diphosphate biosynthesis via DXP pathway; isopentenyl diphosphate from 1-deoxy-D-xylulose 5-phosphate: step 1/6. Catalyzes the NADPH-dependent rearrangement and reduction of 1-deoxy-D-xylulose-5-phosphate (DXP) to 2-C-methyl-D-erythritol 4-phosphate (MEP). This chain is 1-deoxy-D-xylulose 5-phosphate reductoisomerase, found in Corynebacterium efficiens (strain DSM 44549 / YS-314 / AJ 12310 / JCM 11189 / NBRC 100395).